Reading from the N-terminus, the 182-residue chain is P21 prophage-derived terminase small subunit (182 aa).

S31–G36 serves as a coordination point for ATP.

Belongs to the terminase small subunit family. As to quaternary structure, heterooligomer of gp1 and gp2.

Functionally, involved in the initiation of the phage DNA packaging into the prohead. Processes replicating concatemeric DNA into pieces of unit length with cohesive ends. This Escherichia coli O6:H1 (strain CFT073 / ATCC 700928 / UPEC) protein is P21 prophage-derived terminase small subunit (nohA).